The sequence spans 249 residues: Small ribosomal subunit protein eS6 (249 aa).

A compositionally biased stretch (basic residues) spans Leu223–Ala238. Positions Leu223 to Lys249 are disordered.

It belongs to the eukaryotic ribosomal protein eS6 family. Ribosomal protein S6 is the major substrate of protein kinases in eukaryote ribosomes.

Functionally, component of the 40S small ribosomal subunit. Plays an important role in controlling cell growth and proliferation through the selective translation of particular classes of mRNA. This is Small ribosomal subunit protein eS6 (RPS6) from Leishmania major.